A 32-amino-acid chain; its full sequence is Jingzhaotoxin F4-32.60 (32 aa).

Intrachain disulfides connect cysteine 2–cysteine 17, cysteine 9–cysteine 22, and cysteine 16–cysteine 29. At aspartate 31 the chain carries Aspartic acid 1-amide.

This sequence belongs to the neurotoxin 10 (Hwtx-1) family. 30 (Jztx-14) subfamily. In terms of processing, amidated as well as non-amidated forms are found in the venom. As to expression, expressed by the venom gland.

It localises to the secreted. Functionally, probable ion channel inhibitor. The sequence is that of Jingzhaotoxin F4-32.60 from Chilobrachys guangxiensis (Chinese earth tiger tarantula).